The following is a 284-amino-acid chain: Bifunctional protein FolD (284 aa).

Gly-166–Ser-168 provides a ligand contact to NADP(+).

Belongs to the tetrahydrofolate dehydrogenase/cyclohydrolase family. As to quaternary structure, homodimer.

It catalyses the reaction (6R)-5,10-methylene-5,6,7,8-tetrahydrofolate + NADP(+) = (6R)-5,10-methenyltetrahydrofolate + NADPH. The enzyme catalyses (6R)-5,10-methenyltetrahydrofolate + H2O = (6R)-10-formyltetrahydrofolate + H(+). It participates in one-carbon metabolism; tetrahydrofolate interconversion. In terms of biological role, catalyzes the oxidation of 5,10-methylenetetrahydrofolate to 5,10-methenyltetrahydrofolate and then the hydrolysis of 5,10-methenyltetrahydrofolate to 10-formyltetrahydrofolate. This is Bifunctional protein FolD from Legionella pneumophila (strain Paris).